The chain runs to 116 residues: uncharacterized protein (116 aa).

Residues 6–83 (ATVHVGNLAP…RCIRVSPANF (78 aa)) form the RRM domain.

It localises to the cytoplasm. It is found in the nucleus. This is an uncharacterized protein from Schizosaccharomyces pombe (strain 972 / ATCC 24843) (Fission yeast).